The sequence spans 606 residues: Proline--tRNA ligase (606 aa).

The protein belongs to the class-II aminoacyl-tRNA synthetase family. ProS type 1 subfamily. As to quaternary structure, homodimer.

Its subcellular location is the cytoplasm. The catalysed reaction is tRNA(Pro) + L-proline + ATP = L-prolyl-tRNA(Pro) + AMP + diphosphate. In terms of biological role, catalyzes the attachment of proline to tRNA(Pro) in a two-step reaction: proline is first activated by ATP to form Pro-AMP and then transferred to the acceptor end of tRNA(Pro). As ProRS can inadvertently accommodate and process non-cognate amino acids such as alanine and cysteine, to avoid such errors it has two additional distinct editing activities against alanine. One activity is designated as 'pretransfer' editing and involves the tRNA(Pro)-independent hydrolysis of activated Ala-AMP. The other activity is designated 'posttransfer' editing and involves deacylation of mischarged Ala-tRNA(Pro). The misacylated Cys-tRNA(Pro) is not edited by ProRS. The protein is Proline--tRNA ligase of Kocuria rhizophila (strain ATCC 9341 / DSM 348 / NBRC 103217 / DC2201).